A 128-amino-acid chain; its full sequence is MSGRGKQGGKARAKAKTRSSRAGLQFPVGRVHRLLRKGNYSERVGAGAPVYLAAVLEYLTAEILELAGNAARDNKKTRIIPRHLQLAIRNDEELNKLLGRVTIAQGGVLPNIQAVLLPKKTESHHKAK.

Positions 1 to 22 (MSGRGKQGGKARAKAKTRSSRA) are disordered. Residue S2 is modified to N-acetylserine. Residue S2 is modified to Phosphoserine; by RPS6KA5. R4 is modified (citrulline; alternate). R4 is subject to Symmetric dimethylarginine; by PRMT5; alternate. An N6-(2-hydroxyisobutyryl)lysine; alternate mark is found at K6 and K10. K6 carries the N6-(beta-hydroxybutyryl)lysine; alternate modification. Positions 7–19 (QGGKARAKAKTRS) are enriched in basic residues. K10 carries the N6-lactoyllysine; alternate modification. K10 bears the N6-succinyllysine; alternate mark. Glycyl lysine isopeptide (Lys-Gly) (interchain with G-Cter in ubiquitin) cross-links involve residues K14 and K16. K37 bears the N6-(2-hydroxyisobutyryl)lysine; alternate mark. K37 carries the N6-(beta-hydroxybutyryl)lysine; alternate modification. Position 37 is an N6-crotonyllysine; alternate (K37). Residues K75 and K76 each carry the N6-(2-hydroxyisobutyryl)lysine modification. Residue K96 is modified to N6-(2-hydroxyisobutyryl)lysine; alternate. Position 96 is an N6-succinyllysine; alternate (K96). K96 is subject to N6-glutaryllysine; alternate. The residue at position 105 (Q105) is an N5-methylglutamine. N6-(2-hydroxyisobutyryl)lysine; alternate is present on K119. K119 and K120 each carry N6-crotonyllysine; alternate. 2 positions are modified to N6-glutaryllysine; alternate: K119 and K120. N6-(beta-hydroxybutyryl)lysine; alternate is present on K120. A Glycyl lysine isopeptide (Lys-Gly) (interchain with G-Cter in ubiquitin); alternate cross-link involves residue K120. Phosphothreonine; by DCAF1 is present on T121. K126 is subject to N6-(beta-hydroxybutyryl)lysine; alternate. The residue at position 126 (K126) is an N6-crotonyllysine; alternate. N6-glutaryllysine; alternate is present on K126.

The protein belongs to the histone H2A family. The nucleosome is a histone octamer containing two molecules each of H2A, H2B, H3 and H4 assembled in one H3-H4 heterotetramer and two H2A-H2B heterodimers. The octamer wraps approximately 147 bp of DNA. Deiminated on Arg-4 in granulocytes upon calcium entry. In terms of processing, monoubiquitination of Lys-120 (H2AK119Ub) by RING1, TRIM37 and RNF2/RING2 complex gives a specific tag for epigenetic transcriptional repression and participates in X chromosome inactivation of female mammals. It is involved in the initiation of both imprinted and random X inactivation. Ubiquitinated H2A is enriched in inactive X chromosome chromatin. Ubiquitination of H2A functions downstream of methylation of 'Lys-27' of histone H3 (H3K27me). H2AK119Ub by RNF2/RING2 can also be induced by ultraviolet and may be involved in DNA repair. Following DNA double-strand breaks (DSBs), it is ubiquitinated through 'Lys-63' linkage of ubiquitin moieties by the E2 ligase UBE2N and the E3 ligases RNF8 and RNF168, leading to the recruitment of repair proteins to sites of DNA damage. Ubiquitination at Lys-14 and Lys-16 (H2AK13Ub and H2AK15Ub, respectively) in response to DNA damage is initiated by RNF168 that mediates monoubiquitination at these 2 sites, and 'Lys-63'-linked ubiquitin are then conjugated to monoubiquitin; RNF8 is able to extend 'Lys-63'-linked ubiquitin chains in vitro. H2AK119Ub and ionizing radiation-induced 'Lys-63'-linked ubiquitination (H2AK13Ub and H2AK15Ub) are distinct events. Post-translationally, phosphorylation on Ser-2 (H2AS1ph) is enhanced during mitosis. Phosphorylation on Ser-2 by RPS6KA5/MSK1 directly represses transcription. Acetylation of H3 inhibits Ser-2 phosphorylation by RPS6KA5/MSK1. Phosphorylation at Thr-121 (H2AT120ph) by DCAF1 is present in the regulatory region of many tumor suppresor genes and down-regulates their transcription. Symmetric dimethylation on Arg-4 by the PRDM1/PRMT5 complex may play a crucial role in the germ-cell lineage. In terms of processing, glutamine methylation at Gln-105 (H2AQ104me) by FBL is specifically dedicated to polymerase I. It is present at 35S ribosomal DNA locus and impairs binding of the FACT complex. Post-translationally, crotonylation (Kcr) is specifically present in male germ cells and marks testis-specific genes in post-meiotic cells, including X-linked genes that escape sex chromosome inactivation in haploid cells. Crotonylation marks active promoters and enhancers and confers resistance to transcriptional repressors. It is also associated with post-meiotically activated genes on autosomes. Hydroxybutyrylation of histones is induced by starvation. In terms of processing, lactylated in macrophages by EP300/P300 by using lactoyl-CoA directly derived from endogenous or exogenous lactate, leading to stimulates gene transcription.

The protein resides in the nucleus. The protein localises to the chromosome. Functionally, core component of nucleosome. Nucleosomes wrap and compact DNA into chromatin, limiting DNA accessibility to the cellular machineries which require DNA as a template. Histones thereby play a central role in transcription regulation, DNA repair, DNA replication and chromosomal stability. DNA accessibility is regulated via a complex set of post-translational modifications of histones, also called histone code, and nucleosome remodeling. The protein is Histone H2A type 1-H of Mus musculus (Mouse).